A 443-amino-acid polypeptide reads, in one-letter code: Adenylosuccinate synthetase (443 aa).

Residues 12–18 and 40–42 each bind GTP; these read GDEGKGK and GHT. Aspartate 13 (proton acceptor) is an active-site residue. Mg(2+)-binding residues include aspartate 13 and glycine 40. IMP is bound by residues 13 to 16, 38 to 41, threonine 128, arginine 142, glutamine 223, threonine 238, and arginine 302; these read DEGK and NAGH. Histidine 41 functions as the Proton donor in the catalytic mechanism. 298–304 serves as a coordination point for substrate; sequence TTTGRRR. Residues arginine 304, 330–332, and 412–414 contribute to the GTP site; these read KLD and SLG.

The protein belongs to the adenylosuccinate synthetase family. As to quaternary structure, homodimer. Mg(2+) is required as a cofactor.

The protein resides in the cytoplasm. It catalyses the reaction IMP + L-aspartate + GTP = N(6)-(1,2-dicarboxyethyl)-AMP + GDP + phosphate + 2 H(+). It participates in purine metabolism; AMP biosynthesis via de novo pathway; AMP from IMP: step 1/2. Its function is as follows. Plays an important role in the de novo pathway of purine nucleotide biosynthesis. Catalyzes the first committed step in the biosynthesis of AMP from IMP. The protein is Adenylosuccinate synthetase of Picosynechococcus sp. (strain ATCC 27264 / PCC 7002 / PR-6) (Agmenellum quadruplicatum).